Here is a 451-residue protein sequence, read N- to C-terminus: MRECISVHIGQAGIQIGNACWELYCLEHGIQPNGQMPSDKTVGGGDDAFNTFFSETGAGKHVPRAIFVDLEPTVIDEVRTGTYRQLFHPEQLISGKEDAANNFARGHYTIGKEIVDLCLDRIRKLADNCTGLQGFLVFNAVGGGTGSGLGSLLLERLSVDYGKKSKLGFTVYPSPQISTSVVEPYNSVLSTHSLLEHTDVSVLLDNEAIYDICKRSLDIERPTYTNLNRLVSQVISSLTASLRFDGALNVDVTEFQTNLVPYPRIHFMLSSYAPVISAEKAYHEQLSVAEITNSAFEPSSMMAKCDPRHGKYMACCLMYRGDVVPKDVNAAVGTIKTKRTIQFVDWCPTGFKCGINYQAPTVVPGGDLAKVQRAVCMISNSTSVAEVFSRIDTKFDLMYSKRAFVHWYVGEGMEEGEFSEAREDLAALEKDYEEVGAESAEGDDEDEGEDY.

Glutamine 11 serves as a coordination point for GTP. N6-acetyllysine is present on lysine 40. GTP is bound by residues glutamate 71, glycine 144, threonine 145, threonine 179, asparagine 206, and asparagine 228. Glutamate 71 is a binding site for Mg(2+). The active site involves glutamate 254. Positions 432–451 (YEEVGAESAEGDDEDEGEDY) are disordered.

The protein belongs to the tubulin family. In terms of assembly, dimer of alpha and beta chains. A typical microtubule is a hollow water-filled tube with an outer diameter of 25 nm and an inner diameter of 15 nM. Alpha-beta heterodimers associate head-to-tail to form protofilaments running lengthwise along the microtubule wall with the beta-tubulin subunit facing the microtubule plus end conferring a structural polarity. Microtubules usually have 13 protofilaments but different protofilament numbers can be found in some organisms and specialized cells. It depends on Mg(2+) as a cofactor. Undergoes a tyrosination/detyrosination cycle, the cyclic removal and re-addition of a C-terminal tyrosine residue by the enzymes tubulin tyrosine carboxypeptidase (TTCP) and tubulin tyrosine ligase (TTL), respectively. Post-translationally, acetylation of alpha chains at Lys-40 stabilizes microtubules and affects affinity and processivity of microtubule motors. This modification has a role in multiple cellular functions, ranging from cell motility, cell cycle progression or cell differentiation to intracellular trafficking and signaling.

The protein resides in the cytoplasm. It is found in the cytoskeleton. It catalyses the reaction GTP + H2O = GDP + phosphate + H(+). Functionally, tubulin is the major constituent of microtubules, a cylinder consisting of laterally associated linear protofilaments composed of alpha- and beta-tubulin heterodimers. Microtubules grow by the addition of GTP-tubulin dimers to the microtubule end, where a stabilizing cap forms. Below the cap, tubulin dimers are in GDP-bound state, owing to GTPase activity of alpha-tubulin. This Daucus carota (Wild carrot) protein is Tubulin alpha chain (TBA).